The primary structure comprises 24 residues: Pyruvate kinase (24 aa).

It belongs to the pyruvate kinase family. As to quaternary structure, homotetramer. Mg(2+) serves as cofactor. The cofactor is K(+).

The enzyme catalyses pyruvate + ATP = phosphoenolpyruvate + ADP + H(+). It participates in carbohydrate degradation; glycolysis; pyruvate from D-glyceraldehyde 3-phosphate: step 5/5. The sequence is that of Pyruvate kinase (pyk) from Clostridium pasteurianum.